The chain runs to 174 residues: Shikimate kinase 2 (174 aa).

12–17 (GAGKTT) contributes to the ATP binding site. Mg(2+) is bound by residues Thr16 and Asp32. Residues Asp34, Arg58, and Gly79 each contribute to the substrate site. The tract at residues 112-126 (AEDPEEAQRPSLTGK) is LID domain. Arg120 contacts ATP. A substrate-binding site is contributed by Arg139. Gln155 contacts ATP.

It belongs to the shikimate kinase family. AroL subfamily. As to quaternary structure, monomer. Mg(2+) is required as a cofactor.

Its subcellular location is the cytoplasm. The enzyme catalyses shikimate + ATP = 3-phosphoshikimate + ADP + H(+). It participates in metabolic intermediate biosynthesis; chorismate biosynthesis; chorismate from D-erythrose 4-phosphate and phosphoenolpyruvate: step 5/7. Catalyzes the specific phosphorylation of the 3-hydroxyl group of shikimic acid using ATP as a cosubstrate. This is Shikimate kinase 2 from Yersinia pestis bv. Antiqua (strain Antiqua).